A 53-amino-acid polypeptide reads, in one-letter code: ATP synthase protein 8 (53 aa).

A helical membrane pass occupies residues 4–24 (MAPISWLLLFIIFSITFILFC).

The protein belongs to the ATPase protein 8 family. As to quaternary structure, F-type ATPases have 2 components, CF(1) - the catalytic core - and CF(0) - the membrane proton channel.

It is found in the mitochondrion membrane. In terms of biological role, mitochondrial membrane ATP synthase (F(1)F(0) ATP synthase or Complex V) produces ATP from ADP in the presence of a proton gradient across the membrane which is generated by electron transport complexes of the respiratory chain. F-type ATPases consist of two structural domains, F(1) - containing the extramembraneous catalytic core and F(0) - containing the membrane proton channel, linked together by a central stalk and a peripheral stalk. During catalysis, ATP synthesis in the catalytic domain of F(1) is coupled via a rotary mechanism of the central stalk subunits to proton translocation. Part of the complex F(0) domain. Minor subunit located with subunit a in the membrane. This chain is ATP synthase protein 8 (mt:ATPase8), found in Drosophila mauritiana (Fruit fly).